We begin with the raw amino-acid sequence, 815 residues long: Subtilisin-like protease SBT2.5 (815 aa).

The N-terminal stretch at 1-19 (MDIGLRIFVVFVLLVAVTA) is a signal peptide. The 104-residue stretch at 21–124 (VYIVTMEGDP…RSVDKDWKVR (104 aa)) folds into the Inhibitor I9 domain. Positions 120-671 (DWKVRRLTTH…SGHVNPSAAL (552 aa)) constitute a Peptidase S8 domain. Active-site charge relay system residues include Asp160 and His234. The PA domain maps to 397 to 501 (TLVSANDVLL…VSKSMDLIDY (105 aa)). 2 N-linked (GlcNAc...) asparagine glycosylation sites follow: Asn503 and Asn577. Catalysis depends on Ser596, which acts as the Charge relay system. N-linked (GlcNAc...) asparagine glycosylation is present at Asn701.

This sequence belongs to the peptidase S8 family. In terms of tissue distribution, expressed in roots, leaves and flowers of mature plants.

This chain is Subtilisin-like protease SBT2.5, found in Arabidopsis thaliana (Mouse-ear cress).